Here is a 229-residue protein sequence, read N- to C-terminus: Large ribosomal subunit protein uL1 (229 aa).

It belongs to the universal ribosomal protein uL1 family. In terms of assembly, part of the 50S ribosomal subunit.

Its function is as follows. Binds directly to 23S rRNA. The L1 stalk is quite mobile in the ribosome, and is involved in E site tRNA release. Functionally, protein L1 is also a translational repressor protein, it controls the translation of the L11 operon by binding to its mRNA. This Clostridium acetobutylicum (strain ATCC 824 / DSM 792 / JCM 1419 / IAM 19013 / LMG 5710 / NBRC 13948 / NRRL B-527 / VKM B-1787 / 2291 / W) protein is Large ribosomal subunit protein uL1.